Reading from the N-terminus, the 477-residue chain is Exodeoxyribonuclease 7 large subunit (477 aa).

A disordered region spans residues 456 to 477; it reads GGTVAPRKAPPKKPGGGQGSLL.

It belongs to the XseA family. In terms of assembly, heterooligomer composed of large and small subunits.

Its subcellular location is the cytoplasm. It catalyses the reaction Exonucleolytic cleavage in either 5'- to 3'- or 3'- to 5'-direction to yield nucleoside 5'-phosphates.. Its function is as follows. Bidirectionally degrades single-stranded DNA into large acid-insoluble oligonucleotides, which are then degraded further into small acid-soluble oligonucleotides. The polypeptide is Exodeoxyribonuclease 7 large subunit (Parvibaculum lavamentivorans (strain DS-1 / DSM 13023 / NCIMB 13966)).